The primary structure comprises 2408 residues: Protein ELYS (2408 aa).

The tract at residues Met-1–Gly-492 is seven-bladed beta propeller repeats. Positions Tyr-1016–Arg-2408 are disordered. Residues Pro-1124–Ser-1145 show a composition bias toward polar residues. A compositionally biased stretch (acidic residues) spans Asn-1457–Glu-1466. Composition is skewed to polar residues over residues Ile-1705–Leu-1719 and Pro-1735–Thr-1750. Residues Gln-2136–Arg-2149 show a composition bias toward basic and acidic residues. Sufficient for chromatin-binding regions lie at residues Ser-2281–Ile-2359 and Ile-2359–Arg-2408. A sufficient to block nuclear pore assembly region spans residues Ser-2281–Arg-2408. Positions Ser-2329 to Lys-2341 form a DNA-binding region, a.T hook. Residues Pro-2331–Lys-2348 show a composition bias toward basic residues. Residues Asp-2378–Ser-2389 are compositionally biased toward basic and acidic residues.

This sequence belongs to the ELYS family. As to quaternary structure, interacts with the Nup107-160 subcomplex of the NPC.

The protein resides in the nucleus. The protein localises to the nuclear pore complex. It localises to the cytoplasm. It is found in the nucleoplasm. Its function is as follows. Required for the assembly of a functional nuclear pore complex (NPC) on the surface of chromosomes as nuclei form at the end of mitosis. May initiate NPC assembly by binding to chromatin and recruiting the Nup107-160 subcomplex, which may in turn recruit membrane vesicles containing pom121 and tmem48/ndc1. Association with chromatin may require the presence of the mcm2-mcm7 complex, suggesting a mechanism for coordination of nuclear assembly and the inactivation of replication licensing. This is Protein ELYS (ahctf1) from Xenopus laevis (African clawed frog).